Consider the following 330-residue polypeptide: Aspartate--ammonia ligase (330 aa).

It belongs to the class-II aminoacyl-tRNA synthetase family. AsnA subfamily.

The protein localises to the cytoplasm. It carries out the reaction L-aspartate + NH4(+) + ATP = L-asparagine + AMP + diphosphate + H(+). Its pathway is amino-acid biosynthesis; L-asparagine biosynthesis; L-asparagine from L-aspartate (ammonia route): step 1/1. In Escherichia coli O45:K1 (strain S88 / ExPEC), this protein is Aspartate--ammonia ligase.